A 345-amino-acid chain; its full sequence is Uroporphyrinogen decarboxylase (345 aa).

Residues 27 to 31 (RQAGR), F46, D76, Y152, S207, and H321 each bind substrate.

Belongs to the uroporphyrinogen decarboxylase family. Homodimer.

It is found in the cytoplasm. It catalyses the reaction uroporphyrinogen III + 4 H(+) = coproporphyrinogen III + 4 CO2. The protein operates within porphyrin-containing compound metabolism; protoporphyrin-IX biosynthesis; coproporphyrinogen-III from 5-aminolevulinate: step 4/4. Functionally, catalyzes the decarboxylation of four acetate groups of uroporphyrinogen-III to yield coproporphyrinogen-III. The protein is Uroporphyrinogen decarboxylase of Staphylococcus aureus (strain USA300 / TCH1516).